Consider the following 188-residue polypeptide: Dual specificity protein phosphatase 18 (188 aa).

The Tyrosine-protein phosphatase domain occupies 19 to 160 (GLSQITKSLY…LIHYEFQLFG (142 aa)). The sufficient for mitochondrial localization stretch occupies residues 95 to 141 (MKQGRTLLHCAAGVSRSAALCLAYLMKYHAMSLLDAHTWTKSCRPII). Cys104 acts as the Phosphocysteine intermediate in catalysis.

It belongs to the protein-tyrosine phosphatase family. Non-receptor class dual specificity subfamily.

The protein localises to the cytoplasm. The protein resides in the nucleus. It localises to the mitochondrion inner membrane. It carries out the reaction O-phospho-L-tyrosyl-[protein] + H2O = L-tyrosyl-[protein] + phosphate. It catalyses the reaction O-phospho-L-seryl-[protein] + H2O = L-seryl-[protein] + phosphate. The catalysed reaction is O-phospho-L-threonyl-[protein] + H2O = L-threonyl-[protein] + phosphate. Functionally, can dephosphorylate single and diphosphorylated synthetic MAPK peptides, with preference for the phosphotyrosine and diphosphorylated forms over phosphothreonine. In vitro, dephosphorylates p-nitrophenyl phosphate (pNPP). The polypeptide is Dual specificity protein phosphatase 18 (DUSP18) (Pongo abelii (Sumatran orangutan)).